The sequence spans 490 residues: Cytochrome P450 2C25 (490 aa).

Cys435 provides a ligand contact to heme.

It belongs to the cytochrome P450 family. Heme serves as cofactor.

The protein localises to the endoplasmic reticulum membrane. Its subcellular location is the microsome membrane. The catalysed reaction is an organic molecule + reduced [NADPH--hemoprotein reductase] + O2 = an alcohol + oxidized [NADPH--hemoprotein reductase] + H2O + H(+). In terms of biological role, catalyzes the hydroxylation of tolbutamide and the N-demethylation of aminopyrine and benzphetamine. Also has testosterone hydroxylase (16 beta) activity. This chain is Cytochrome P450 2C25 (CYP2C25), found in Mesocricetus auratus (Golden hamster).